The sequence spans 480 residues: ATP synthase subunit beta, chloroplastic (480 aa).

161-168 (GGAGVGKT) contacts ATP.

It belongs to the ATPase alpha/beta chains family. F-type ATPases have 2 components, CF(1) - the catalytic core - and CF(0) - the membrane proton channel. CF(1) has five subunits: alpha(3), beta(3), gamma(1), delta(1), epsilon(1). CF(0) has four main subunits: a(1), b(1), b'(1) and c(9-12).

The protein resides in the plastid. It is found in the chloroplast thylakoid membrane. It catalyses the reaction ATP + H2O + 4 H(+)(in) = ADP + phosphate + 5 H(+)(out). Functionally, produces ATP from ADP in the presence of a proton gradient across the membrane. The catalytic sites are hosted primarily by the beta subunits. This is ATP synthase subunit beta, chloroplastic from Tetradesmus obliquus (Green alga).